Reading from the N-terminus, the 652-residue chain is Bifunctional protein ThiO/ThiG (652 aa).

Residues 1–366 form a thiO region; sequence MTRDIVIIGG…HYSRFQKQAS (366 aa). Residues 5-19 and 44-46 each bind FAD; these read IVIIGGGVIGLAIAV and AGM. Glutamate 52 provides a ligand contact to glycine. Valine 173 contacts FAD. Glycine is bound by residues arginine 301 and arginine 327. 325–331 is an FAD binding site; it reads HYRNGIL. The tract at residues 393 to 652 is thiG; it reads SLIIAGKSFH…ASSPVTGTIS (260 aa). The active-site Schiff-base intermediate with DXP is the lysine 494. Residues glycine 555, 581 to 582, and 603 to 604 contribute to the 1-deoxy-D-xylulose 5-phosphate site; these read AG and NS.

In the N-terminal section; belongs to the DAO family. ThiO subfamily. It in the C-terminal section; belongs to the ThiG family. In terms of assembly, interacts with ThiH and ThiS. It depends on FAD as a cofactor.

The protein localises to the cytoplasm. It catalyses the reaction glycine + O2 + H2O = glyoxylate + H2O2 + NH4(+). The enzyme catalyses [ThiS sulfur-carrier protein]-C-terminal-Gly-aminoethanethioate + 2-iminoacetate + 1-deoxy-D-xylulose 5-phosphate = [ThiS sulfur-carrier protein]-C-terminal Gly-Gly + 2-[(2R,5Z)-2-carboxy-4-methylthiazol-5(2H)-ylidene]ethyl phosphate + 2 H2O + H(+). It functions in the pathway cofactor biosynthesis; thiamine diphosphate biosynthesis. In terms of biological role, catalyzes the FAD-dependent oxidative deamination of glycine. Is essential for thiamine biosynthesis since the oxidation of glycine catalyzed by ThiO generates the glycine imine intermediate (dehydroglycine) required for the biosynthesis of the thiazole ring of thiamine pyrophosphate. Its function is as follows. Catalyzes the rearrangement of 1-deoxy-D-xylulose 5-phosphate (DXP) to produce the thiazole phosphate moiety of thiamine. Sulfur is provided by the thiocarboxylate moiety of the carrier protein ThiS. In vitro, sulfur can be provided by H(2)S. The protein is Bifunctional protein ThiO/ThiG (thiO/thiG) of Trichormus variabilis (strain ATCC 29413 / PCC 7937) (Anabaena variabilis).